A 514-amino-acid chain; its full sequence is Type-2 serine--tRNA ligase (514 aa).

L-serine is bound at residue Ala313. Cys315 contacts Zn(2+). L-serine is bound at residue Arg344. Residues 344–346 and 355–356 contribute to the ATP site; these read RWE and RV. 361–363 contributes to the L-serine binding site; it reads RGE. Zn(2+) is bound by residues Glu363 and Cys470. Arg477 provides a ligand contact to ATP.

The protein belongs to the class-II aminoacyl-tRNA synthetase family. Type-2 seryl-tRNA synthetase subfamily. As to quaternary structure, homodimer. The cofactor is Zn(2+).

Its subcellular location is the cytoplasm. The catalysed reaction is tRNA(Ser) + L-serine + ATP = L-seryl-tRNA(Ser) + AMP + diphosphate + H(+). It carries out the reaction tRNA(Sec) + L-serine + ATP = L-seryl-tRNA(Sec) + AMP + diphosphate + H(+). It functions in the pathway aminoacyl-tRNA biosynthesis; selenocysteinyl-tRNA(Sec) biosynthesis; L-seryl-tRNA(Sec) from L-serine and tRNA(Sec): step 1/1. In terms of biological role, catalyzes the attachment of serine to tRNA(Ser). Is also able to aminoacylate tRNA(Sec) with serine, to form the misacylated tRNA L-seryl-tRNA(Sec), which will be further converted into selenocysteinyl-tRNA(Sec). The chain is Type-2 serine--tRNA ligase (serS) from Methanococcus maripaludis (strain DSM 14266 / JCM 13030 / NBRC 101832 / S2 / LL).